Here is a 540-residue protein sequence, read N- to C-terminus: Aquaporin-5 (540 aa).

A disordered region spans residues 1-224; sequence MSGEGTDLPT…ESIDGYNYES (224 aa). The Cytoplasmic segment spans residues 1–263; sequence MSGEGTDLPT…QWMNSNFKNH (263 aa). Over residues 25–44 the composition is skewed to polar residues; sequence PGSSQQQLVPIAHTISSPSK. Basic and acidic residues-rich tracts occupy residues 119-133, 140-155, 174-194, and 204-214; these read RARE…EREN, RARD…ERSR, YFDD…KGMR, and SGEKVRRKSTD. The helical transmembrane segment at 264-284 threads the bilayer; it reads FVATIGEFVGTTMFLFFAFAG. Topologically, residues 285–308 are extracellular; the sequence is TQVANIDSNTVNTTTGAATGFNIA. An N-linked (GlcNAc...) asparagine glycan is attached at Asn296. Residues 309 to 329 traverse the membrane as a helical segment; that stretch reads VQLYIAVIFGFSLMVNVWIFF. Topologically, residues 330–332 are cytoplasmic; that stretch reads RIS. Residues 333-353 form a helical membrane-spanning segment; it reads GGLFNPAVTLGMVLVGAIPIP. At 354–356 the chain is on the extracellular side; sequence RAA. The chain crosses the membrane as a helical span at residues 357-377; sequence CLFFAQILGGIAASGMVLGLF. At 378 to 393 the chain is on the cytoplasmic side; sequence PTTFNVRTTLGASTST. A helical membrane pass occupies residues 394-414; that stretch reads VQGVFIEAILTAELVFTIFML. Topologically, residues 415-420 are extracellular; sequence AKEKHK. The helical transmembrane segment at 421–441 threads the bilayer; that stretch reads ATFIAPVGIGLALFIAEMVGV. Topologically, residues 442–467 are cytoplasmic; it reads YYTGGSLNPARSFGPCVVSGSFDKEH. Residues 468-488 traverse the membrane as a helical segment; that stretch reads WIYWIGPITGTFIAVFFYKFI. The Extracellular segment spans residues 489–540; sequence KMLEYEMANPGQDGDAKNDPTQNEKKREQILEERNRRYEKRNGSLRPGSRLS. The interval 499–540 is disordered; it reads GQDGDAKNDPTQNEKKREQILEERNRRYEKRNGSLRPGSRLS. Positions 502 to 530 are enriched in basic and acidic residues; it reads GDAKNDPTQNEKKREQILEERNRRYEKRN. Asn530 carries N-linked (GlcNAc...) asparagine glycosylation.

It belongs to the MIP/aquaporin (TC 1.A.8) family.

It localises to the membrane. The catalysed reaction is H2O(in) = H2O(out). In terms of biological role, water channel required to facilitate the transport of water across membranes. May play a role in the vegetative growth. This chain is Aquaporin-5, found in Botryotinia fuckeliana (strain B05.10) (Noble rot fungus).